A 64-amino-acid polypeptide reads, in one-letter code: Basic secretory protease (64 aa).

A divalent metal cation serves as cofactor. Post-translationally, glycosylated.

Its activity is regulated as follows. Inhibited by EDTA. In terms of biological role, metalloprotease, digests gelatin and azocasein (in vitro). The protein is Basic secretory protease of Boswellia serrata (Indian frankincense).